Here is a 356-residue protein sequence, read N- to C-terminus: sn-glycerol-3-phosphate import ATP-binding protein UgpC (356 aa).

One can recognise an ABC transporter domain in the interval 4–235; the sequence is LKLQAVTKSW…PASLFVASFI (232 aa). ATP is bound at residue 37–44; it reads GPSGCGKS.

It belongs to the ABC transporter superfamily. sn-glycerol-3-phosphate importer (TC 3.A.1.1.3) family. In terms of assembly, the complex is composed of two ATP-binding proteins (UgpC), two transmembrane proteins (UgpA and UgpE) and a solute-binding protein (UgpB).

The protein resides in the cell inner membrane. The catalysed reaction is sn-glycerol 3-phosphate(out) + ATP + H2O = sn-glycerol 3-phosphate(in) + ADP + phosphate + H(+). Part of the ABC transporter complex UgpBAEC involved in sn-glycerol-3-phosphate (G3P) import. Responsible for energy coupling to the transport system. The polypeptide is sn-glycerol-3-phosphate import ATP-binding protein UgpC (Shigella sonnei (strain Ss046)).